A 319-amino-acid chain; its full sequence is Methionyl-tRNA formyltransferase (319 aa).

Ser112–Pro115 serves as a coordination point for (6S)-5,6,7,8-tetrahydrofolate.

It belongs to the Fmt family.

The catalysed reaction is L-methionyl-tRNA(fMet) + (6R)-10-formyltetrahydrofolate = N-formyl-L-methionyl-tRNA(fMet) + (6S)-5,6,7,8-tetrahydrofolate + H(+). Functionally, attaches a formyl group to the free amino group of methionyl-tRNA(fMet). The formyl group appears to play a dual role in the initiator identity of N-formylmethionyl-tRNA by promoting its recognition by IF2 and preventing the misappropriation of this tRNA by the elongation apparatus. In Pelobacter propionicus (strain DSM 2379 / NBRC 103807 / OttBd1), this protein is Methionyl-tRNA formyltransferase.